Here is a 425-residue protein sequence, read N- to C-terminus: Serine--tRNA ligase (425 aa).

233-235 (TAE) provides a ligand contact to L-serine. An ATP-binding site is contributed by 264 to 266 (RRE). E287 contributes to the L-serine binding site. Position 351–354 (351–354 (EISS)) interacts with ATP. S385 is an L-serine binding site.

It belongs to the class-II aminoacyl-tRNA synthetase family. Type-1 seryl-tRNA synthetase subfamily. Homodimer. The tRNA molecule binds across the dimer.

It is found in the cytoplasm. The catalysed reaction is tRNA(Ser) + L-serine + ATP = L-seryl-tRNA(Ser) + AMP + diphosphate + H(+). It carries out the reaction tRNA(Sec) + L-serine + ATP = L-seryl-tRNA(Sec) + AMP + diphosphate + H(+). It participates in aminoacyl-tRNA biosynthesis; selenocysteinyl-tRNA(Sec) biosynthesis; L-seryl-tRNA(Sec) from L-serine and tRNA(Sec): step 1/1. Catalyzes the attachment of serine to tRNA(Ser). Is also able to aminoacylate tRNA(Sec) with serine, to form the misacylated tRNA L-seryl-tRNA(Sec), which will be further converted into selenocysteinyl-tRNA(Sec). In Prochlorococcus marinus (strain SARG / CCMP1375 / SS120), this protein is Serine--tRNA ligase.